Here is an 89-residue protein sequence, read N- to C-terminus: Cell division topological specificity factor (89 aa).

This sequence belongs to the MinE family.

In terms of biological role, prevents the cell division inhibition by proteins MinC and MinD at internal division sites while permitting inhibition at polar sites. This ensures cell division at the proper site by restricting the formation of a division septum at the midpoint of the long axis of the cell. The polypeptide is Cell division topological specificity factor (Klebsiella pneumoniae (strain 342)).